A 496-amino-acid chain; its full sequence is Pyrrole-2-carboxylic acid decarboxylase (496 aa).

Trp-166 is a K(+) binding site. Val-168, Arg-170, Gln-187, and His-188 together coordinate prenylated FMN. His-188 is a Mn(2+) binding site. Residues Ala-218, Ala-219, Met-221, and Glu-229 each contribute to the K(+) site. Glu-229 contributes to the prenylated FMN binding site. A Mn(2+)-binding site is contributed by Glu-229. Glu-278 acts as the Proton donor in catalysis. His-386 is a binding site for prenylated FMN.

It belongs to the UbiD family. UbiD-like/FDC subfamily. Homodimer. It depends on prenylated FMN as a cofactor. The cofactor is Mn(2+). K(+) is required as a cofactor.

The catalysed reaction is pyrrole-2-carboxylate + H(+) = 1H-pyrrole + CO2. It catalyses the reaction pyrrole-2-carboxylate + H2O = 1H-pyrrole + hydrogencarbonate. Its activity is regulated as follows. Imidazole acts as a reversible inhibitor via the formation of an imidazole-prenyl-FMN adduct. Activity is light sensitive. Its function is as follows. Catalyzes the prenyl-FMN-dependent decarboxylation of pyrrole-2-carboxylate (P2C). Can also catalyze the carboxylation of pyrrole in the presence of elevated concentrations of CO(2) or bicarbonate. Can accept a modest range of heteroaromatic compounds such as 3-methylpyrrole-2-carboxylate, indole-3-carboxylate and furan-2-carboxylate, and shows very low activity with thiophene-2-carboxylate. Attenuates the virulence of P.aeruginosa in a Drosophila model when overexpressed. This is Pyrrole-2-carboxylic acid decarboxylase from Pseudomonas aeruginosa (strain ATCC 15692 / DSM 22644 / CIP 104116 / JCM 14847 / LMG 12228 / 1C / PRS 101 / PAO1).